Here is a 197-residue protein sequence, read N- to C-terminus: Nucleoside triphosphate pyrophosphatase (197 aa).

D71 acts as the Proton acceptor in catalysis.

It belongs to the Maf family. It depends on a divalent metal cation as a cofactor.

The protein localises to the cytoplasm. The enzyme catalyses a ribonucleoside 5'-triphosphate + H2O = a ribonucleoside 5'-phosphate + diphosphate + H(+). It catalyses the reaction a 2'-deoxyribonucleoside 5'-triphosphate + H2O = a 2'-deoxyribonucleoside 5'-phosphate + diphosphate + H(+). Its function is as follows. Nucleoside triphosphate pyrophosphatase. May have a dual role in cell division arrest and in preventing the incorporation of modified nucleotides into cellular nucleic acids. The protein is Nucleoside triphosphate pyrophosphatase of Trichormus variabilis (strain ATCC 29413 / PCC 7937) (Anabaena variabilis).